A 224-amino-acid chain; its full sequence is Ribonuclease 3 (224 aa).

The RNase III domain maps to 5–127; it reads LERLCRRLNY…ILAAIYLDGG (123 aa). Glutamate 40 provides a ligand contact to Mg(2+). The active site involves aspartate 44. Mg(2+)-binding residues include aspartate 113 and glutamate 116. Glutamate 116 is an active-site residue. Residues 154–224 form the DRBM domain; sequence DAKTQLQEFL…AKAMLEQLQG (71 aa).

The protein belongs to the ribonuclease III family. In terms of assembly, homodimer. It depends on Mg(2+) as a cofactor.

The protein localises to the cytoplasm. It carries out the reaction Endonucleolytic cleavage to 5'-phosphomonoester.. Its function is as follows. Digests double-stranded RNA. Involved in the processing of primary rRNA transcript to yield the immediate precursors to the large and small rRNAs (23S and 16S). Processes some mRNAs, and tRNAs when they are encoded in the rRNA operon. Processes pre-crRNA and tracrRNA of type II CRISPR loci if present in the organism. This chain is Ribonuclease 3, found in Legionella pneumophila (strain Lens).